Consider the following 273-residue polypeptide: DnaJ homolog subfamily C member 27-A (273 aa).

Residues 23 to 30, 71 to 75, and 134 to 137 each bind GTP; these read GNAEVGKS, DMAGH, and NKID. A J domain is found at 217 to 273; the sequence is DSWDMLGVKPGATRDEVNKAYRKLAVLLHPDKCMAPGSEDAFKAVVNARTALLKNIK.

This sequence belongs to the small GTPase superfamily. Rab family.

It localises to the nucleus. GTPase possibly involved in regulation of the MEK/ERK pathway. This is DnaJ homolog subfamily C member 27-A (dnajc27-a) from Xenopus laevis (African clawed frog).